Here is a 438-residue protein sequence, read N- to C-terminus: uncharacterized protein (438 aa).

2 disordered regions span residues 1–22 (MRDNTAKGITAGSGSQQTTYDP) and 156–264 (DTAK…PWRP). The segment covering 156–170 (DTAKSNEKLQGDESK) has biased composition (basic and acidic residues). Over residues 171 to 189 (SSNGSSSTSTTTQRGSTNS) the composition is skewed to low complexity. Residues 191–206 (TKVKALKIEVKKKSDS) are compositionally biased toward basic and acidic residues.

The protein belongs to the adhesin P1 family.

This is an uncharacterized protein from Mycoplasma pneumoniae (strain ATCC 29342 / M129 / Subtype 1) (Mycoplasmoides pneumoniae).